A 104-amino-acid polypeptide reads, in one-letter code: Thioredoxin (104 aa).

A Thioredoxin domain is found at 2-104 (AIVKVTDSDF…NLAEVLDKHL (103 aa)). Cysteine 29 and cysteine 32 are joined by a disulfide.

It belongs to the thioredoxin family.

In terms of biological role, component of the thioredoxin-thioredoxin reductase system. Participates in various redox reactions through the reversible oxidation of its active center dithiol to a disulfide and catalyzes dithiol-disulfide exchange reactions. The chain is Thioredoxin (trxA) from Staphylococcus epidermidis (strain ATCC 35984 / DSM 28319 / BCRC 17069 / CCUG 31568 / BM 3577 / RP62A).